Reading from the N-terminus, the 310-residue chain is U-megalopygitoxin(8)-Mo15 (310 aa).

A signal peptide spans 1-27; it reads MARFSSKNLTKLFQYLVLSLLSPVAFG.

This sequence belongs to the megalysin family. Contains 3 disulfide bonds. Expressed by the venom apparatus.

It is found in the secreted. The protein localises to the target cell membrane. Functionally, may function as a large pore-forming protein. This is U-megalopygitoxin(8)-Mo15 from Megalopyge opercularis (Southern flannel moth).